A 184-amino-acid chain; its full sequence is Protein GrpE (184 aa).

A compositionally biased stretch (polar residues) spans 1-14; sequence MANEQNEQSQDLSS. Residues 1-35 form a disordered region; that stretch reads MANEQNEQSQDLSSEQTTQDHEQTQTEGVEQGAEI.

It belongs to the GrpE family. In terms of assembly, homodimer.

The protein resides in the cytoplasm. Functionally, participates actively in the response to hyperosmotic and heat shock by preventing the aggregation of stress-denatured proteins, in association with DnaK and GrpE. It is the nucleotide exchange factor for DnaK and may function as a thermosensor. Unfolded proteins bind initially to DnaJ; upon interaction with the DnaJ-bound protein, DnaK hydrolyzes its bound ATP, resulting in the formation of a stable complex. GrpE releases ADP from DnaK; ATP binding to DnaK triggers the release of the substrate protein, thus completing the reaction cycle. Several rounds of ATP-dependent interactions between DnaJ, DnaK and GrpE are required for fully efficient folding. The sequence is that of Protein GrpE from Acinetobacter baylyi (strain ATCC 33305 / BD413 / ADP1).